The primary structure comprises 1140 residues: Condensin-2 complex subunit G2 (1140 aa).

The stretch at 460 to 493 (LLPALKSSLHDSSEKVRVAFVGMLLKIKAARAAK) is one HEAT repeat.

Component of the condensin-2 complex, which contains the smc2 and smc4 heterodimer, and three non SMC subunits that probably regulate the complex: ncaph2, ncapd3 and ncapg2.

The protein localises to the nucleus. Regulatory subunit of the condensin-2 complex, a complex which establishes mitotic chromosome architecture and is involved in physical rigidity of the chromatid axis. Plays a role in the embryonic development of the head and kidney structures. This Danio rerio (Zebrafish) protein is Condensin-2 complex subunit G2.